The following is a 72-amino-acid chain: Sec-independent protein translocase protein TatA (72 aa).

A helical membrane pass occupies residues 1–21 (MAGLSIWHVVIFAIVVILLFG). The tract at residues 47–72 (DEAASLNSPRTIDAQVKTSESTSVKS) is disordered. Positions 51–72 (SLNSPRTIDAQVKTSESTSVKS) are enriched in polar residues.

Belongs to the TatA/E family. The Tat system comprises two distinct complexes: a TatABC complex, containing multiple copies of TatA, TatB and TatC subunits, and a separate TatA complex, containing only TatA subunits. Substrates initially bind to the TatABC complex, which probably triggers association of the separate TatA complex to form the active translocon.

Its subcellular location is the cell inner membrane. Part of the twin-arginine translocation (Tat) system that transports large folded proteins containing a characteristic twin-arginine motif in their signal peptide across membranes. TatA could form the protein-conducting channel of the Tat system. The sequence is that of Sec-independent protein translocase protein TatA from Acinetobacter baumannii (strain AB307-0294).